A 606-amino-acid polypeptide reads, in one-letter code: DNA primase (606 aa).

The segment at 40–64 adopts a CHC2-type zinc-finger fold; sequence CPFHQEKTPSFYVVPEKRFYFCHGC. Residues 256–349 form the Toprim domain; the sequence is KAAVLVEGYF…DPDTFARREG (94 aa). Mg(2+) is bound by residues glutamate 262, aspartate 307, and aspartate 309. The tract at residues 429–451 is disordered; it reads VPLPKPAGGDAPPSSPNRPAPPL. Residues 441-451 are compositionally biased toward pro residues; sequence PSSPNRPAPPL.

It belongs to the DnaG primase family. Monomer. Interacts with DnaB. Zn(2+) serves as cofactor. Requires Mg(2+) as cofactor.

The catalysed reaction is ssDNA + n NTP = ssDNA/pppN(pN)n-1 hybrid + (n-1) diphosphate.. RNA polymerase that catalyzes the synthesis of short RNA molecules used as primers for DNA polymerase during DNA replication. In Myxococcus xanthus, this protein is DNA primase.